A 259-amino-acid polypeptide reads, in one-letter code: uncharacterized protein (259 aa).

Belongs to the methyltransferase superfamily.

This is an uncharacterized protein from Mycobacteroides abscessus (strain ATCC 19977 / DSM 44196 / CCUG 20993 / CIP 104536 / JCM 13569 / NCTC 13031 / TMC 1543 / L948) (Mycobacterium abscessus).